A 91-amino-acid chain; its full sequence is Small ribosomal subunit protein bS20 (91 aa).

Residues 1-18 show a composition bias toward basic and acidic residues; sequence MPLHKSAEKRLRQSERRN. The tract at residues 1–26 is disordered; the sequence is MPLHKSAEKRLRQSERRNARNRSRKK.

Belongs to the bacterial ribosomal protein bS20 family.

Functionally, binds directly to 16S ribosomal RNA. The chain is Small ribosomal subunit protein bS20 from Pelodictyon phaeoclathratiforme (strain DSM 5477 / BU-1).